Consider the following 365-residue polypeptide: DNA repair protein rhp51 (365 aa).

Residues 1-25 (MADTEVEMQVSAADTNNNENGQAQS) are disordered. A compositionally biased stretch (polar residues) spans 12 to 25 (AADTNNNENGQAQS). 149–156 (GEFRTGKS) contacts ATP.

The protein belongs to the RecA family. RAD51 subfamily. As to quaternary structure, interacts with rad22, rad54, rdh54, rhp54, rti1, swi2 and swi5. Forms homooiligomers.

It is found in the nucleus. In terms of biological role, required both for recombination and for the repair of DNA damage caused by X-rays. Binds to single and double-stranded DNA, in the presence of magnesium, and exhibits DNA-dependent ATPase activity. Promotes DNA strand annealing and strand exchange via DNA recombinase activity and forms helical nucleoprotein filaments. The sequence is that of DNA repair protein rhp51 (rhp51) from Schizosaccharomyces pombe (strain 972 / ATCC 24843) (Fission yeast).